Consider the following 96-residue polypeptide: Aspartyl/glutamyl-tRNA(Asn/Gln) amidotransferase subunit C (96 aa).

The protein belongs to the GatC family. Heterotrimer of A, B and C subunits.

It catalyses the reaction L-glutamyl-tRNA(Gln) + L-glutamine + ATP + H2O = L-glutaminyl-tRNA(Gln) + L-glutamate + ADP + phosphate + H(+). The enzyme catalyses L-aspartyl-tRNA(Asn) + L-glutamine + ATP + H2O = L-asparaginyl-tRNA(Asn) + L-glutamate + ADP + phosphate + 2 H(+). Functionally, allows the formation of correctly charged Asn-tRNA(Asn) or Gln-tRNA(Gln) through the transamidation of misacylated Asp-tRNA(Asn) or Glu-tRNA(Gln) in organisms which lack either or both of asparaginyl-tRNA or glutaminyl-tRNA synthetases. The reaction takes place in the presence of glutamine and ATP through an activated phospho-Asp-tRNA(Asn) or phospho-Glu-tRNA(Gln). This Leptospira interrogans serogroup Icterohaemorrhagiae serovar copenhageni (strain Fiocruz L1-130) protein is Aspartyl/glutamyl-tRNA(Asn/Gln) amidotransferase subunit C.